Here is a 791-residue protein sequence, read N- to C-terminus: MQIEEIQNYPANLPVLVEDELFLYPFMITPIFINDSSNMKALDLAIKNDSMLFVAPSKLENGRNFDEIYNCGVIGTIMRKVPLPDGRVKILFQGYAKGKIIEQISNKPLEAKIELIKEDFLEGTKKEALLEVLKEKVKNLANISHYFSPDLLRTIEEGFDASRICDLILNTVRIKKQVAYEFFVLTDLEQKLVKLIDLIAQEIEANKIQKEIKNKVHSRIDKVNKEYFLKEQLRQIQKELGSDTQKEDEVREYQKRLELKKKFMHEDAYKEIKKQIEKFERIHQDNSEASMIQTYIETALDIPFEKISKKKLDIKEVSKQLNHDHYALNKPKERIEEYFAVRELLEKRKIAEKDGAKVILCLYGPPGVGKTSLANSVSKALKRELIRIALGGLEDVNELRGHRRTYIGAMPGRITQGLIEAKQINPVIVLDEIDKLNRSFRGDPSAVLLEILDPEQNSKFRDYYLNFNIDLSKVIFIATANDISNIPAPLRDRMEFIELSSYTPSEKFHIMKKYLIPDELKKHGLKSNELSIDDETIELIISDYTRESGVRNLRRKVAELCRKSAKKLLLENIKKVIINTKNLNEFLDKKVFEIEKNNGENQVGQVNGLAWTSVGGDVLKVEAVKIKGKGELTLTGSLGDVMKESARIAFSMIKVLIDEGKIKIPKKIIIDPKVNVYDSYNIHIHVPDGATPKDGPSAGITISTAIASIFSDKKVKADVAMTGEIDLKGKVLPIGGLKEKLIAAYKADIKTALIPRKNYERDLKDIPSEVRDNMEIIAVDTFSDVLEYTLV.

The Lon N-terminal domain occupies 13–203 (LPVLVEDELF…KLIDLIAQEI (191 aa)). 364–371 (GPPGVGKT) provides a ligand contact to ATP. One can recognise a Lon proteolytic domain in the interval 600–791 (ENQVGQVNGL…FSDVLEYTLV (192 aa)). Active-site residues include Ser697 and Lys740.

Belongs to the peptidase S16 family. In terms of assembly, homohexamer. Organized in a ring with a central cavity.

Its subcellular location is the cytoplasm. It carries out the reaction Hydrolysis of proteins in presence of ATP.. ATP-dependent serine protease that mediates the selective degradation of mutant and abnormal proteins as well as certain short-lived regulatory proteins. Required for cellular homeostasis and for survival from DNA damage and developmental changes induced by stress. Degrades polypeptides processively to yield small peptide fragments that are 5 to 10 amino acids long. Binds to DNA in a double-stranded, site-specific manner. The chain is Lon protease from Campylobacter jejuni subsp. jejuni serotype O:2 (strain ATCC 700819 / NCTC 11168).